The sequence spans 311 residues: Methionyl-tRNA formyltransferase (311 aa).

112–115 contributes to the (6S)-5,6,7,8-tetrahydrofolate binding site; it reads SLLP.

It belongs to the Fmt family.

It carries out the reaction L-methionyl-tRNA(fMet) + (6R)-10-formyltetrahydrofolate = N-formyl-L-methionyl-tRNA(fMet) + (6S)-5,6,7,8-tetrahydrofolate + H(+). Its function is as follows. Attaches a formyl group to the free amino group of methionyl-tRNA(fMet). The formyl group appears to play a dual role in the initiator identity of N-formylmethionyl-tRNA by promoting its recognition by IF2 and preventing the misappropriation of this tRNA by the elongation apparatus. The polypeptide is Methionyl-tRNA formyltransferase (Bartonella henselae (strain ATCC 49882 / DSM 28221 / CCUG 30454 / Houston 1) (Rochalimaea henselae)).